We begin with the raw amino-acid sequence, 495 residues long: NADH-ubiquinone oxidoreductase chain 4 (495 aa).

Transmembrane regions (helical) follow at residues 9–29 (YFDL…LLFI), 39–59 (LIGL…WIQF), 89–109 (LSLF…LVGW), 118–138 (EYII…CMLD), 139–159 (LLLF…IIGV), 173–193 (FFLY…LILL), 214–234 (ILLW…VPVH), 245–265 (PTAG…YGFL), 272–292 (FPEA…IAII), 313–333 (VAHM…GIGG), 335–355 (ILLM…VGVL), 367–387 (YGGL…FTLA), 388–408 (NMSL…VGAF), 413–433 (LVAT…LWLY), and 457–477 (VFIF…PKVF).

The protein belongs to the complex I subunit 4 family.

It is found in the mitochondrion membrane. It catalyses the reaction a ubiquinone + NADH + 5 H(+)(in) = a ubiquinol + NAD(+) + 4 H(+)(out). Its function is as follows. Core subunit of the mitochondrial membrane respiratory chain NADH dehydrogenase (Complex I) that is believed to belong to the minimal assembly required for catalysis. Complex I functions in the transfer of electrons from NADH to the respiratory chain. The immediate electron acceptor for the enzyme is believed to be ubiquinone. The protein is NADH-ubiquinone oxidoreductase chain 4 (ND4) of Triticum aestivum (Wheat).